The following is a 483-amino-acid chain: MSVTKSTEGPQGAVAIKLDLMSPPESAKKLENKDSTFLDESPSESAGLKKTKGITVFQALIHLVKGNMGTGILGLPLAVKNAGILMGPLSLLVMGFIACHCMHILVKCAQRFCKRLNKPFMDYGDTVMHGLEANPNAWLQNHAHWGRHIVSFFLIITQLGFCCVYIVFLADNLKQVVEAVNSTTNNCYSNETVILTPTMDSRLYMLSFLPFLVLLVLIRNLRILTIFSMLANISMLVSLVIIIQYITQEIPDPSRLPLVASWKTYPLFFGTAIFSFESIGVVLPLENKMKNARHFPAILSLGMSIVTSLYIGMAALGYLRFGDDIKASISLNLPNCWLYQSVKLLYIAGILCTYALQFYVPAEIIIPFAISRVSTRWALPLDLSIRLVMVCLTCLLAILIPRLDLVISLVGSVSGTALALIIPPLLEVTTFYSEGMSPLTIFKDALISILGFVGFVVGTYQALDELLKSEDSHPFSNSTTFVR.

Residues 1 to 58 (MSVTKSTEGPQGAVAIKLDLMSPPESAKKLENKDSTFLDESPSESAGLKKTKGITVFQ) are Cytoplasmic-facing. The segment covering 26–36 (SAKKLENKDST) has biased composition (basic and acidic residues). Positions 26–46 (SAKKLENKDSTFLDESPSESA) are disordered. The chain crosses the membrane as a helical span at residues 59–79 (ALIHLVKGNMGTGILGLPLAV). The Extracellular segment spans residues 80-81 (KN). Residues 82–102 (AGILMGPLSLLVMGFIACHCM) traverse the membrane as a helical segment. At 103–148 (HILVKCAQRFCKRLNKPFMDYGDTVMHGLEANPNAWLQNHAHWGRH) the chain is on the cytoplasmic side. Residues 149–169 (IVSFFLIITQLGFCCVYIVFL) form a helical membrane-spanning segment. The Extracellular segment spans residues 170–197 (ADNLKQVVEAVNSTTNNCYSNETVILTP). Residues 198–218 (TMDSRLYMLSFLPFLVLLVLI) traverse the membrane as a helical segment. Residues 219-222 (RNLR) are Cytoplasmic-facing. The chain crosses the membrane as a helical span at residues 223–243 (ILTIFSMLANISMLVSLVIII). Over 244–264 (QYITQEIPDPSRLPLVASWKT) the chain is Extracellular. A helical membrane pass occupies residues 265–285 (YPLFFGTAIFSFESIGVVLPL). Over 286–296 (ENKMKNARHFP) the chain is Cytoplasmic. The helical transmembrane segment at 297 to 317 (AILSLGMSIVTSLYIGMAALG) threads the bilayer. The Extracellular portion of the chain corresponds to 318–349 (YLRFGDDIKASISLNLPNCWLYQSVKLLYIAG). Residues 350–370 (ILCTYALQFYVPAEIIIPFAI) traverse the membrane as a helical segment. Topologically, residues 371–379 (SRVSTRWAL) are cytoplasmic. Residues 380-400 (PLDLSIRLVMVCLTCLLAILI) traverse the membrane as a helical segment. The Extracellular segment spans residues 401–404 (PRLD). The helical transmembrane segment at 405 to 425 (LVISLVGSVSGTALALIIPPL) threads the bilayer. Over 426–437 (LEVTTFYSEGMS) the chain is Cytoplasmic. A helical membrane pass occupies residues 438-458 (PLTIFKDALISILGFVGFVVG). The Extracellular segment spans residues 459-483 (TYQALDELLKSEDSHPFSNSTTFVR).

It belongs to the amino acid/polyamine transporter 2 family. In terms of tissue distribution, abundantly expressed in kidney and muscle. Expressed in the S1 segment of the proximal tubule close to the glomerulus.

The protein localises to the cell membrane. It localises to the endoplasmic reticulum membrane. Its subcellular location is the recycling endosome membrane. The catalysed reaction is glycine(in) + H(+)(in) = glycine(out) + H(+)(out). It catalyses the reaction L-alanine(in) + H(+)(in) = L-alanine(out) + H(+)(out). The enzyme catalyses D-alanine(in) + H(+)(in) = D-alanine(out) + H(+)(out). It carries out the reaction L-proline(out) + H(+)(out) = L-proline(in) + H(+)(in). The catalysed reaction is D-proline(out) + H(+)(out) = D-proline(in) + H(+)(in). It catalyses the reaction 4-hydroxy-L-proline(in) + H(+)(in) = 4-hydroxy-L-proline(out) + H(+)(out). The enzyme catalyses L-serine(in) + H(+)(in) = L-serine(out) + H(+)(out). It carries out the reaction D-serine(out) + H(+)(out) = D-serine(in) + H(+)(in). The catalysed reaction is beta-alanine(in) + H(+)(in) = beta-alanine(out) + H(+)(out). It catalyses the reaction 4-aminobutanoate(in) + H(+)(in) = 4-aminobutanoate(out) + H(+)(out). The enzyme catalyses sarcosine(in) + H(+)(in) = sarcosine(out) + H(+)(out). It carries out the reaction N,N-dimethylglycine(in) + H(+)(in) = N,N-dimethylglycine(out) + H(+)(out). In terms of biological role, electrogenic proton/amino acid symporter with a high selectivity for the small side chains amino acids glycine, alanine and proline, where both L- and D-enantiomers are transported. Extension of the backbone length, as in beta-alanine and 4-aminobutanoate or methylation of the amino group, as in sarcosine and N,N-dimethylglycine, are also tolerated but decrease transport efficiency. A free carboxyl group is preferred. In Homo sapiens (Human), this protein is Proton-coupled amino acid transporter 2.